Reading from the N-terminus, the 502-residue chain is Probable cytosol aminopeptidase (502 aa).

Mn(2+)-binding residues include K270 and D275. The active site involves K282. Residues D293, D352, and E354 each coordinate Mn(2+). The active site involves R356.

Belongs to the peptidase M17 family. It depends on Mn(2+) as a cofactor.

The protein localises to the cytoplasm. It catalyses the reaction Release of an N-terminal amino acid, Xaa-|-Yaa-, in which Xaa is preferably Leu, but may be other amino acids including Pro although not Arg or Lys, and Yaa may be Pro. Amino acid amides and methyl esters are also readily hydrolyzed, but rates on arylamides are exceedingly low.. The enzyme catalyses Release of an N-terminal amino acid, preferentially leucine, but not glutamic or aspartic acids.. Presumably involved in the processing and regular turnover of intracellular proteins. Catalyzes the removal of unsubstituted N-terminal amino acids from various peptides. The polypeptide is Probable cytosol aminopeptidase (Buchnera aphidicola subsp. Schizaphis graminum (strain Sg)).